The sequence spans 179 residues: Large ribosomal subunit protein uL5 (179 aa).

It belongs to the universal ribosomal protein uL5 family. Part of the 50S ribosomal subunit; part of the 5S rRNA/L5/L18/L25 subcomplex. Contacts the 5S rRNA and the P site tRNA. Forms a bridge to the 30S subunit in the 70S ribosome.

Functionally, this is one of the proteins that bind and probably mediate the attachment of the 5S RNA into the large ribosomal subunit, where it forms part of the central protuberance. In the 70S ribosome it contacts protein S13 of the 30S subunit (bridge B1b), connecting the 2 subunits; this bridge is implicated in subunit movement. Contacts the P site tRNA; the 5S rRNA and some of its associated proteins might help stabilize positioning of ribosome-bound tRNAs. The protein is Large ribosomal subunit protein uL5 of Rickettsia africae (strain ESF-5).